Consider the following 81-residue polypeptide: MAHSVKIYDTCIGCTQCVRACPTDVLEMIPWNGCKANQIASAPRTEDCVGCKRCESACPTDFLSVRVYLGSETTRSMGLAY.

2 consecutive 4Fe-4S ferredoxin-type domains span residues A2–W31 and I39–Y68. Positions 11, 14, 17, 21, 48, 51, 54, and 58 each coordinate [4Fe-4S] cluster.

In terms of assembly, the eukaryotic PSI reaction center is composed of at least 11 subunits. [4Fe-4S] cluster serves as cofactor.

The protein localises to the plastid. It localises to the chloroplast thylakoid membrane. The catalysed reaction is reduced [plastocyanin] + hnu + oxidized [2Fe-2S]-[ferredoxin] = oxidized [plastocyanin] + reduced [2Fe-2S]-[ferredoxin]. Functionally, apoprotein for the two 4Fe-4S centers FA and FB of photosystem I (PSI); essential for photochemical activity. FB is the terminal electron acceptor of PSI, donating electrons to ferredoxin. The C-terminus interacts with PsaA/B/D and helps assemble the protein into the PSI complex. Required for binding of PsaD and PsaE to PSI. PSI is a plastocyanin-ferredoxin oxidoreductase, converting photonic excitation into a charge separation, which transfers an electron from the donor P700 chlorophyll pair to the spectroscopically characterized acceptors A0, A1, FX, FA and FB in turn. In Psilotum nudum (Whisk fern), this protein is Photosystem I iron-sulfur center.